The chain runs to 317 residues: MPVQGSLRSLVGAVNSTPTASPHLRPATNQTEPQCLEVSVPVGLFLCLGLVSLVENTLVVAVIAKNRNLHSPMYCFICCLALSDLLVSVSNVLKTAVLLLLEAGALAAQATVVQQLGNVINMLICSSMVSSLCFLGAIAMDRYISIFYALRYHSIVTLARARRAIAAVWVASILSSILFFTYYDRTAALLCLVVFFLAMLVLMAVLYVHMLTQACQHAQGIARLHKRQHPVQQGWGLKGAATLAVLLGVFFLCWGPLFLHLTLIAVCPQHPTCNCIVKNFKLFLALIICNAIVDPLIYAFRSQELRKTLKEVLLFSW.

Over 1–37 the chain is Extracellular; sequence MPVQGSLRSLVGAVNSTPTASPHLRPATNQTEPQCLE. A glycan (N-linked (GlcNAc...) asparagine) is linked at asparagine 29. A helical membrane pass occupies residues 38-63; that stretch reads VSVPVGLFLCLGLVSLVENTLVVAVI. The Cytoplasmic segment spans residues 64-72; the sequence is AKNRNLHSP. The helical transmembrane segment at 73-93 threads the bilayer; the sequence is MYCFICCLALSDLLVSVSNVL. Topologically, residues 94–118 are extracellular; it reads KTAVLLLLEAGALAAQATVVQQLGN. Residues 119–140 form a helical membrane-spanning segment; it reads VINMLICSSMVSSLCFLGAIAM. Residues 141–163 lie on the Cytoplasmic side of the membrane; that stretch reads DRYISIFYALRYHSIVTLARARR. The helical transmembrane segment at 164–183 threads the bilayer; it reads AIAAVWVASILSSILFFTYY. Over 184 to 191 the chain is Extracellular; it reads DRTAALLC. Residues 192 to 211 traverse the membrane as a helical segment; sequence LVVFFLAMLVLMAVLYVHML. Residues 212–240 are Cytoplasmic-facing; that stretch reads TQACQHAQGIARLHKRQHPVQQGWGLKGA. The helical transmembrane segment at 241-266 threads the bilayer; that stretch reads ATLAVLLGVFFLCWGPLFLHLTLIAV. The Extracellular segment spans residues 267-279; sequence CPQHPTCNCIVKN. A helical transmembrane segment spans residues 280-300; the sequence is FKLFLALIICNAIVDPLIYAF. At 301-317 the chain is on the cytoplasmic side; that stretch reads RSQELRKTLKEVLLFSW.

This sequence belongs to the G-protein coupled receptor 1 family. Interacts with MGRN1, but does not undergo MGRN1-mediated ubiquitination; this interaction competes with GNAS-binding and thus inhibits agonist-induced cAMP production. Interacts with OPN3; the interaction results in a decrease in MC1R-mediated cAMP signaling and ultimately a decrease in melanin production in melanocytes.

Its subcellular location is the cell membrane. Receptor for MSH (alpha, beta and gamma) and ACTH. The activity of this receptor is mediated by G proteins which activate adenylate cyclase. Mediates melanogenesis, the production of eumelanin (black/brown) and phaeomelanin (red/yellow), via regulation of cAMP signaling in melanocytes. This chain is Melanocyte-stimulating hormone receptor (MC1R), found in Varecia rubra (Red ruffed lemur).